The chain runs to 500 residues: Chromosomal replication initiator protein DnaA (500 aa).

The segment at 1 to 81 (MVNASGDPVI…LQALRTVTGE (81 aa)) is domain I, interacts with DnaA modulators. Residues 81–155 (ENMFPAFKVV…QQKMNRDPET (75 aa)) are domain II. The tract at residues 156-377 (HLNKNFTFDS…GALTRVTAVA (222 aa)) is domain III, AAA+ region. Positions 200, 202, 203, and 204 each coordinate ATP. The tract at residues 378 to 500 (SLSNQPVTRA…TVRLKQSNTN (123 aa)) is domain IV, binds dsDNA.

It belongs to the DnaA family. Oligomerizes as a right-handed, spiral filament on DNA at oriC.

The protein localises to the cytoplasm. Its function is as follows. Plays an essential role in the initiation and regulation of chromosomal replication. ATP-DnaA binds to the origin of replication (oriC) to initiate formation of the DNA replication initiation complex once per cell cycle. Binds the DnaA box (a 9 base pair repeat at the origin) and separates the double-stranded (ds)DNA. Forms a right-handed helical filament on oriC DNA; dsDNA binds to the exterior of the filament while single-stranded (ss)DNA is stabiized in the filament's interior. The ATP-DnaA-oriC complex binds and stabilizes one strand of the AT-rich DNA unwinding element (DUE), permitting loading of DNA polymerase. After initiation quickly degrades to an ADP-DnaA complex that is not apt for DNA replication. Binds acidic phospholipids. The sequence is that of Chromosomal replication initiator protein DnaA from Bifidobacterium longum (strain DJO10A).